Here is a 320-residue protein sequence, read N- to C-terminus: Mitochondrial thiamine pyrophosphate carrier 1 (320 aa).

3 Solcar repeats span residues 12-110, 119-205, and 213-308; these read GTRR…TTQA, PQPV…LRPS, and PFGS…TLRA. A run of 6 helical transmembrane segments spans residues 17-35, 91-107, 125-145, 180-197, 219-239, and 283-300; these read VVLA…VAPL, LMYV…YRTT, FVAG…LDLL, GCSA…LFFA, ALAG…LDLV, and GLTV…VTMW.

The protein belongs to the mitochondrial carrier (TC 2.A.29) family.

It is found in the mitochondrion inner membrane. In terms of biological role, mitochondrial transporter that mediates uptake of thiamine pyrophosphate (ThPP) into mitochondria. This chain is Mitochondrial thiamine pyrophosphate carrier 1 (tpc1), found in Aspergillus terreus (strain NIH 2624 / FGSC A1156).